The primary structure comprises 198 residues: Recombination protein RecR (198 aa).

The C4-type zinc-finger motif lies at 57 to 72 (CSVCGHITDRDPCYIC). Residues 80–175 (SVVCVVQEPK…KVTRIAHGLP (96 aa)) enclose the Toprim domain.

This sequence belongs to the RecR family.

May play a role in DNA repair. It seems to be involved in an RecBC-independent recombinational process of DNA repair. It may act with RecF and RecO. The protein is Recombination protein RecR of Bacillus mycoides (strain KBAB4) (Bacillus weihenstephanensis).